A 685-amino-acid polypeptide reads, in one-letter code: Linoleate 9/13-lipoxygenase (685 aa).

The N-terminal stretch at Met1–Ala19 is a signal peptide. The region spanning Ala122–Ile685 is the Lipoxygenase domain. Fe cation contacts are provided by His377, His382, His555, Asn559, and Ile685.

This sequence belongs to the lipoxygenase family. As to quaternary structure, monomer. The cofactor is Fe cation.

The protein resides in the periplasm. It catalyses the reaction (9Z,12Z)-octadecadienoate + O2 = (9S)-hydroperoxy-(10E,12Z)-octadecadienoate. The enzyme catalyses (9Z)-octadecenoate + O2 = (8E,10S)-10-hydroperoxy-octadeca-8-enoate. The catalysed reaction is (9Z,12Z)-octadecadienoate + O2 = (8E,10S,12Z)-10-hydroperoxyoctadeca-8,12-dienoate. It carries out the reaction (9Z,12Z,15Z)-octadecatrienoate + O2 = (8E,10S,12Z,15Z)-10-hydroperoxyoctadeca-8,12,15-trienoate. It catalyses the reaction (9Z,12Z)-octadecadienoate + O2 = (13S)-hydroperoxy-(9Z,11E)-octadecadienoate. The enzyme catalyses (9Z,12Z,15Z)-octadecatrienoate + O2 = (13S)-hydroperoxy-(9Z,11E,15Z)-octadecatrienoate. Its activity is regulated as follows. Inhibited by Ba(2+), Zn(2+) and Fe(3+). In presence of oxygen, converts linoleate into (9S)-hydroperoxy-10,12-octadecenoate (9HPOD), which spontaneously decomposes to the corresponding 9-hydroxy-10,12-octadecenoate (9HOD), and into 13-hydroperoxy-9,11-octadecenoate (13HPOD) which spontaneously decomposes to the corresponding 13-hydroxy-9,11-octadecenoate (13HOD). Also active on linolenate. To a lesser extent, is also able to convert oleate into (10S)-hydroperoxy-8E-octadecenoate, which spontaneously decomposes to the corresponding 10-hydroxy-8E-octadecenoate. Is almost not active on arachidonate. The polypeptide is Linoleate 9/13-lipoxygenase (lox) (Pseudomonas aeruginosa).